The chain runs to 504 residues: Dihydrolipoamide dehydrogenase (504 aa).

The N-terminal 34 residues, 1-34 (MLSQRLIGRTAVKSAFRPSGLPTVVNASRWRRGY), are a transit peptide targeting the mitochondrion. Residues 69-78 (EKRGTLGGTC), lysine 87, glycine 151, and 180-182 (TGS) each bind FAD. A disulfide bridge connects residues cysteine 78 and cysteine 83. Residues 217 to 224 (GGGIIGLE), glutamate 240, valine 275, and glycine 310 contribute to the NAD(+) site. Residues aspartate 351 and 357–360 (MLAH) each bind FAD. Histidine 483 (proton acceptor) is an active-site residue.

It belongs to the class-I pyridine nucleotide-disulfide oxidoreductase family. As to quaternary structure, eukaryotic pyruvate dehydrogenase (PDH) complexes are organized as a core consisting of the oligomeric dihydrolipoamide acetyl-transferase (E2), around which are arranged multiple copies of pyruvate dehydrogenase (E1), dihydrolipoamide dehydrogenase (E3) and protein X (E3BP) bound by non-covalent bonds. The Chaetomium thermophilum PDH complex contains 60 E2 units, 12 E3BP units, about 20 E1 units, and 12 or more E3 units. The units are organized in 1 E2 60-mer, 4 E3BP trimers, about 20 E1 tetramers, and a maximum of 12 E3 dimers. The E3BP trimers are bound inside the icosahedral core with tetrahedral symmetry. The cofactor is FAD.

Its subcellular location is the mitochondrion. It catalyses the reaction N(6)-[(R)-dihydrolipoyl]-L-lysyl-[protein] + NAD(+) = N(6)-[(R)-lipoyl]-L-lysyl-[protein] + NADH + H(+). Lipoamide dehydrogenase is a component of the alpha-ketoacid dehydrogenase complexes. This includes the pyruvate dehydrogenase complex, which catalyzes the overall conversion of pyruvate to acetyl-CoA and CO(2). Also acts as a component of the glycine cleavage system (glycine decarboxylase complex), which catalyzes the degradation of glycine. The 10-megadalton pyruvate dehydrogenase complex contains multiple copies of three enzymatic components: pyruvate dehydrogenase (E1), dihydrolipoamide acetyltransferase (E2) and lipoamide dehydrogenase (E3) and catalyzes the overall oxidative decarboxylation of pyruvate to form acetyl-CoA and CO(2). Within the complex, pyruvate and thiamine pyrophosphate (TPP or vitamin B1) are bound by pyruvate dehydrogenase E1 subunits alpha and beta and pyruvate is decarboxylated leading to the 2-carbon hydrohyethyl bound to TPP. The E2 component contains covalently-bound lipoyl cofactors and transfers the hydroxyethyl group from TPP to an oxidized form of covalently bound lipoamide, and the resulting acetyl group is then transferred to free coenzyme A to form acetyl-CoA and reduced dihydrolipoamide-E2. Finally, the flavoprotein dihydrolipoamide dehydrogenase (E3) re-oxidizes the lipoyl group of dihydrolipoamide-E2 to form lipoamide-E2 and NADH. A fourth subunit, E3BP, is responsible for tethering E3 in proximity to the core, forming the entire metabolon. This chain is Dihydrolipoamide dehydrogenase, found in Chaetomium thermophilum (strain DSM 1495 / CBS 144.50 / IMI 039719) (Thermochaetoides thermophila).